We begin with the raw amino-acid sequence, 1026 residues long: UPF0182 protein FRAAL6027 (1026 aa).

Transmembrane regions (helical) follow at residues 13–33 (AKVIVPVLLAVALVIAFVAIF), 60–80 (ILLFLIFGAVMAVVIGTNIVL), 108–128 (YMKLVLVAVAAVFGLAAGLSA), 167–187 (FLLGFLLTAVLLSLLVTVLTH), 208–228 (AHISVLLGLLALLKAWAYYLD), 250–270 (AVLPAKLILLFISLACAVLFI), and 283–303 (LGAGILVLSSVVIGGIYPAFI). Over residues 877-888 (AAAGAGTGATTT) the composition is skewed to low complexity. 2 disordered regions span residues 877 to 916 (AAAGAGTGATTTTGGGGQATTQGGGTGAAPPGGTSGLQDA) and 958 to 1026 (LASP…PPPG). Over residues 889 to 903 (TGGGGQATTQGGGTG) the composition is skewed to gly residues. Low complexity predominate over residues 970–1001 (PTPSRSAAPTTRGTAAGSAPPGTTPAVAAPAG). Over residues 1016 to 1026 (PQQPRAAPPPG) the composition is skewed to pro residues.

The protein belongs to the UPF0182 family.

It is found in the cell membrane. The protein is UPF0182 protein FRAAL6027 of Frankia alni (strain DSM 45986 / CECT 9034 / ACN14a).